The sequence spans 421 residues: 2',3'-cyclic-nucleotide 3'-phosphodiesterase (421 aa).

Phosphoserine occurs at positions 6 and 9. Position 110 is a phosphotyrosine (tyrosine 110). Serine 170 bears the Phosphoserine mark. Histidine 251 acts as the Proton acceptor in catalysis. Threonine 253 provides a ligand contact to substrate. Residue histidine 330 is the Proton donor of the active site. Threonine 332 serves as a coordination point for substrate. Serine 359 bears the Phosphoserine mark. Cysteine methyl ester is present on cysteine 418. Cysteine 418 carries S-farnesyl cysteine lipidation. Positions 419–421 are cleaved as a propeptide — removed in mature form; sequence TII.

The protein belongs to the 2H phosphoesterase superfamily. CNPase family. Exists as monomers and homodimers.

It is found in the membrane. It localises to the melanosome. It catalyses the reaction a nucleoside 2',3'-cyclic phosphate + H2O = a nucleoside 2'-phosphate + H(+). Catalyzes the formation of 2'-nucleotide products from 2',3'-cyclic substrates. May participate in RNA metabolism in the myelinating cell, CNP is the third most abundant protein in central nervous system myelin. In Homo sapiens (Human), this protein is 2',3'-cyclic-nucleotide 3'-phosphodiesterase.